A 31-amino-acid chain; its full sequence is Potassium channel toxin alpha-KTx 19.2 (31 aa).

3 disulfide bridges follow: cysteine 3–cysteine 22, cysteine 8–cysteine 27, and cysteine 12–cysteine 29.

This sequence belongs to the short scorpion toxin superfamily. Potassium channel inhibitor family. Alpha-KTx 19 subfamily. As to quaternary structure, monomer. Expressed by the venom gland.

Its subcellular location is the secreted. Blocks voltage-gated potassium channels rKv1.1/KCNA1, rKv1.2/KCNA2, hKv1.3/KCNA3, rKv1.6/KCNA6 (IC(50)=75.9 nM) and, to a lesser extent, Shaker IR (with the inactivation domain removed). This is Potassium channel toxin alpha-KTx 19.2 from Buthus occitanus tunetanus (Common European scorpion).